We begin with the raw amino-acid sequence, 203 residues long: Probable nicotinate-nucleotide adenylyltransferase (203 aa).

This sequence belongs to the NadD family.

The enzyme catalyses nicotinate beta-D-ribonucleotide + ATP + H(+) = deamido-NAD(+) + diphosphate. Its pathway is cofactor biosynthesis; NAD(+) biosynthesis; deamido-NAD(+) from nicotinate D-ribonucleotide: step 1/1. Functionally, catalyzes the reversible adenylation of nicotinate mononucleotide (NaMN) to nicotinic acid adenine dinucleotide (NaAD). The chain is Probable nicotinate-nucleotide adenylyltransferase from Clostridium kluyveri (strain ATCC 8527 / DSM 555 / NBRC 12016 / NCIMB 10680 / K1).